A 335-amino-acid chain; its full sequence is Aliphatic sulfonates import ATP-binding protein SsuB (335 aa).

The tract at residues 48-71 (PFASGGAFGRAPRDDDDDRRGAGD) is disordered. Residues 74–293 (VRLTRVSKRY…ARASAAFAEL (220 aa)) form the ABC transporter domain. 106–113 (GRSGCGKS) contributes to the ATP binding site.

This sequence belongs to the ABC transporter superfamily. Aliphatic sulfonates importer (TC 3.A.1.17.2) family. As to quaternary structure, the complex is composed of two ATP-binding proteins (SsuB), two transmembrane proteins (SsuC) and a solute-binding protein (SsuA).

The protein resides in the cell inner membrane. The enzyme catalyses ATP + H2O + aliphatic sulfonate-[sulfonate-binding protein]Side 1 = ADP + phosphate + aliphatic sulfonateSide 2 + [sulfonate-binding protein]Side 1.. Its function is as follows. Part of the ABC transporter complex SsuABC involved in aliphatic sulfonates import. Responsible for energy coupling to the transport system. The protein is Aliphatic sulfonates import ATP-binding protein SsuB of Burkholderia thailandensis (strain ATCC 700388 / DSM 13276 / CCUG 48851 / CIP 106301 / E264).